A 211-amino-acid polypeptide reads, in one-letter code: Thiamine-phosphate synthase (211 aa).

Residues 37 to 41 and N69 each bind 4-amino-2-methyl-5-(diphosphooxymethyl)pyrimidine; that span reads QLRIK. The Mg(2+) site is built by D70 and D89. S108 contributes to the 4-amino-2-methyl-5-(diphosphooxymethyl)pyrimidine binding site. 134–136 contacts 2-[(2R,5Z)-2-carboxy-4-methylthiazol-5(2H)-ylidene]ethyl phosphate; sequence TQT. K137 provides a ligand contact to 4-amino-2-methyl-5-(diphosphooxymethyl)pyrimidine. 2-[(2R,5Z)-2-carboxy-4-methylthiazol-5(2H)-ylidene]ethyl phosphate contacts are provided by residues G166 and 186-187; that span reads VS.

The protein belongs to the thiamine-phosphate synthase family. Mg(2+) serves as cofactor.

It catalyses the reaction 2-[(2R,5Z)-2-carboxy-4-methylthiazol-5(2H)-ylidene]ethyl phosphate + 4-amino-2-methyl-5-(diphosphooxymethyl)pyrimidine + 2 H(+) = thiamine phosphate + CO2 + diphosphate. The enzyme catalyses 2-(2-carboxy-4-methylthiazol-5-yl)ethyl phosphate + 4-amino-2-methyl-5-(diphosphooxymethyl)pyrimidine + 2 H(+) = thiamine phosphate + CO2 + diphosphate. It carries out the reaction 4-methyl-5-(2-phosphooxyethyl)-thiazole + 4-amino-2-methyl-5-(diphosphooxymethyl)pyrimidine + H(+) = thiamine phosphate + diphosphate. The protein operates within cofactor biosynthesis; thiamine diphosphate biosynthesis; thiamine phosphate from 4-amino-2-methyl-5-diphosphomethylpyrimidine and 4-methyl-5-(2-phosphoethyl)-thiazole: step 1/1. Its function is as follows. Condenses 4-methyl-5-(beta-hydroxyethyl)thiazole monophosphate (THZ-P) and 2-methyl-4-amino-5-hydroxymethyl pyrimidine pyrophosphate (HMP-PP) to form thiamine monophosphate (TMP). This is Thiamine-phosphate synthase from Shigella sonnei (strain Ss046).